Consider the following 108-residue polypeptide: Movement protein TGB2 (108 aa).

Residues 1 to 8 are Cytoplasmic-facing; that stretch reads MPLTPPPD. The chain crosses the membrane as a helical span at residues 9–29; the sequence is YTKPFIAVVVGGTLAAFVLLL. Topologically, residues 30–71 are lumenal; sequence TRNTLPHTGDNLHSLPHGGTYCDGTKRIRYGGPHRSHVPELP. Residues 72–92 traverse the membrane as a helical segment; the sequence is AKSWALITVVAILIALHFSCL. Residues 93-108 are Cytoplasmic-facing; that stretch reads RTHRVHRCVLCHTTSG.

Belongs to the Tymovirales TGBp2 protein family.

The protein localises to the host endoplasmic reticulum membrane. In terms of biological role, plays a role in viral cell-to-cell propagation, by facilitating genome transport to neighboring plant cells through plasmosdesmata,. The protein is Movement protein TGB2 of Lily virus X.